The chain runs to 148 residues: Lysozyme C (148 aa).

The signal sequence occupies residues 1 to 18 (MKALIILGLVLLSVMVQA). The C-type lysozyme domain maps to 19-148 (KVFERCELAR…LRQYIQGCGV (130 aa)). Cystine bridges form between Cys-24–Cys-146, Cys-48–Cys-134, Cys-83–Cys-99, and Cys-95–Cys-113. Active-site residues include Glu-53 and Asp-71.

Belongs to the glycosyl hydrolase 22 family. As to quaternary structure, monomer.

Its subcellular location is the secreted. The catalysed reaction is Hydrolysis of (1-&gt;4)-beta-linkages between N-acetylmuramic acid and N-acetyl-D-glucosamine residues in a peptidoglycan and between N-acetyl-D-glucosamine residues in chitodextrins.. In terms of biological role, lysozymes have primarily a bacteriolytic function; those in tissues and body fluids are associated with the monocyte-macrophage system and enhance the activity of immunoagents. This is Lysozyme C (LYZ) from Hylobates lar (Lar gibbon).